The primary structure comprises 515 residues: Anthranilate synthase component 1 (515 aa).

L-tryptophan contacts are provided by residues threonine 40 and 291–293; that span reads PYM. Position 328-329 (328-329) interacts with chorismate; it reads GT. Glutamate 361 contacts Mg(2+). Residues tyrosine 449, arginine 469, 483–485, and glycine 485 each bind chorismate; that span reads GAG. Glutamate 498 provides a ligand contact to Mg(2+).

It belongs to the anthranilate synthase component I family. As to quaternary structure, heterotetramer consisting of two non-identical subunits: a beta subunit (TrpG) and a large alpha subunit (TrpE). It depends on Mg(2+) as a cofactor.

The enzyme catalyses chorismate + L-glutamine = anthranilate + pyruvate + L-glutamate + H(+). It participates in amino-acid biosynthesis; L-tryptophan biosynthesis; L-tryptophan from chorismate: step 1/5. With respect to regulation, feedback inhibited by tryptophan. In terms of biological role, part of a heterotetrameric complex that catalyzes the two-step biosynthesis of anthranilate, an intermediate in the biosynthesis of L-tryptophan. In the first step, the glutamine-binding beta subunit (TrpG) of anthranilate synthase (AS) provides the glutamine amidotransferase activity which generates ammonia as a substrate that, along with chorismate, is used in the second step, catalyzed by the large alpha subunit of AS (TrpE) to produce anthranilate. In the absence of TrpG, TrpE can synthesize anthranilate directly from chorismate and high concentrations of ammonia. The protein is Anthranilate synthase component 1 (trpE) of Buchnera aphidicola subsp. Schizaphis graminum (strain Sg).